A 126-amino-acid chain; its full sequence is Fatty acid-binding protein 10-A, liver basic (126 aa).

Cholate contacts are provided by Lys-57, Lys-77, His-99, and Gln-101.

It belongs to the calycin superfamily. Fatty-acid binding protein (FABP) family. In terms of tissue distribution, expressed in the developing embryonic liver from 48 hpf. Also expressed in the liver of 5-day-old larvae. In adults, primarily expressed in the liver, with weak expression in the testis and intestine.

Its subcellular location is the cytoplasm. Its function is as follows. Binds hydrophobic ligands, such as cholate, in the cytoplasm. May be involved in intracellular lipid transport. Binds one cholate per subunit. In Danio rerio (Zebrafish), this protein is Fatty acid-binding protein 10-A, liver basic (fabp10a).